Reading from the N-terminus, the 89-residue chain is Putative membrane protein insertion efficiency factor (89 aa).

The tract at residues 69-89 is disordered; sequence DPVPPAHTERGGTMCPSRLPE.

It belongs to the UPF0161 family.

Its subcellular location is the cell inner membrane. Functionally, could be involved in insertion of integral membrane proteins into the membrane. The protein is Putative membrane protein insertion efficiency factor of Paramagnetospirillum magneticum (strain ATCC 700264 / AMB-1) (Magnetospirillum magneticum).